Consider the following 465-residue polypeptide: MFRQEQPLAEGSFAPMGSLQPDAGNSSWNGTEAPGGGTRATPYSLQVTLTLVCLAGLLMLFTVFGNVLVIIAVFTSRALKAPQNLFLVSLASADILVATLVIPFSLANEVMGYWYFGKVWCEIYLALDVLFCTSSIVHLCAISLDRYWSITQAIEYNLKRTPRRIKAIIVTVWVISAVISFPPLISIEKKGAGGGQQPAEPSCKINDQKWYVISSSIGSFFAPCLIMILVYVRIYQIAKRRTRVPPSRRGPDACSAPPGGADRRPNGLGPERGAGPTGAEAEPLPTQLNGAPGEPAPAGPRDGDALDLEESSSSEHAERPPGPRRPDRGPRAKGKTRASQVKPGDSLPRRGPGAAGPGASGSGHGEERGGGAKASRWRGRQNREKRFTFVLAVVIGVFVVCWFPFFFTYTLIAVGCPVPSQLFNFFFWFGYCNSSLNPVIYTIFNHDFRRAFKKILCRGDRKRIV.

Over 1–48 (MFRQEQPLAEGSFAPMGSLQPDAGNSSWNGTEAPGGGTRATPYSLQVT) the chain is Extracellular. N-linked (GlcNAc...) asparagine glycans are attached at residues Asn25 and Asn29. Residues 49–74 (LTLVCLAGLLMLFTVFGNVLVIIAVF) form a helical membrane-spanning segment. Topologically, residues 75–85 (TSRALKAPQNL) are cytoplasmic. Residues 86 to 111 (FLVSLASADILVATLVIPFSLANEVM) traverse the membrane as a helical segment. Residues 112 to 121 (GYWYFGKVWC) lie on the Extracellular side of the membrane. Cys121 and Cys203 form a disulfide bridge. The chain crosses the membrane as a helical span at residues 122–144 (EIYLALDVLFCTSSIVHLCAISL). Residues 145-164 (DRYWSITQAIEYNLKRTPRR) lie on the Cytoplasmic side of the membrane. Residues 165-188 (IKAIIVTVWVISAVISFPPLISIE) traverse the membrane as a helical segment. The Extracellular segment spans residues 189–207 (KKGAGGGQQPAEPSCKIND). The helical transmembrane segment at 208–232 (QKWYVISSSIGSFFAPCLIMILVYV) threads the bilayer. At 233-389 (RIYQIAKRRT…RQNREKRFTF (157 aa)) the chain is on the cytoplasmic side. Residues 242 to 378 (TRVPPSRRGP…GGGAKASRWR (137 aa)) are disordered. A compositionally biased stretch (basic and acidic residues) spans 313–330 (SSEHAERPPGPRRPDRGP). The residue at position 346 (Ser346) is a Phosphoserine. Over residues 353–363 (GAAGPGASGSG) the composition is skewed to gly residues. Arg368 is modified (omega-N-methylarginine). Residues 390 to 414 (VLAVVIGVFVVCWFPFFFTYTLIAV) form a helical membrane-spanning segment. Topologically, residues 415–424 (GCPVPSQLFN) are extracellular. The helical transmembrane segment at 425 to 445 (FFFWFGYCNSSLNPVIYTIFN) threads the bilayer. At 446-465 (HDFRRAFKKILCRGDRKRIV) the chain is on the cytoplasmic side. A lipid anchor (S-palmitoyl cysteine) is attached at Cys457.

Belongs to the G-protein coupled receptor 1 family. Adrenergic receptor subfamily. ADRA2A sub-subfamily.

The protein resides in the cell membrane. Alpha-2 adrenergic receptors mediate the catecholamine-induced inhibition of adenylate cyclase through the action of G proteins. In Mus musculus (Mouse), this protein is Alpha-2A adrenergic receptor.